The chain runs to 352 residues: 3'(2'),5'-bisphosphate nucleotidase (352 aa).

The active-site Proton acceptor is the Asp45. Glu68, Asp133, Ile135, and Asp136 together coordinate Mg(2+). The Proton acceptor role is filled by Thr138. Residues Thr138, His240, Ser264, Lys267, Arg281, and Asp294 each contribute to the adenosine 3',5'-bisphosphate site. Residues His240, Ser264, Lys267, Arg281, and Asp294 each coordinate AMP. A Mg(2+)-binding site is contributed by Asp294.

It belongs to the inositol monophosphatase superfamily. The cofactor is Mg(2+).

The catalysed reaction is 3'-phosphoadenylyl sulfate + H2O = adenosine 5'-phosphosulfate + phosphate. It catalyses the reaction adenosine 3',5'-bisphosphate + H2O = AMP + phosphate. The enzyme catalyses adenosine 2',5'-bisphosphate + H2O = AMP + phosphate. In terms of biological role, phosphatase that converts adenosine 3'-phosphate 5'-phosphosulfate (PAPS) to adenosine 5'-phosphosulfate (APS) and 3'(2')-phosphoadenosine 5'-phosphate (PAP) to AMP. May regulate the flux of sulfur in the sulfur-activation pathway by converting PAPS to APS. Involved in osmoadaptation. This chain is 3'(2'),5'-bisphosphate nucleotidase, found in Emericella nidulans (strain FGSC A4 / ATCC 38163 / CBS 112.46 / NRRL 194 / M139) (Aspergillus nidulans).